Reading from the N-terminus, the 472-residue chain is F-box protein At3g03040 (472 aa).

In terms of domain architecture, F-box spans 1–49 (MDLLSSLPDEVRCLILSFLTTKESASTSVLSKKWRNLFALVPNLDFDDS).

The chain is F-box protein At3g03040 from Arabidopsis thaliana (Mouse-ear cress).